Consider the following 188-residue polypeptide: UPF0398 protein BBR47_29830 (188 aa).

The protein belongs to the UPF0398 family.

The protein is UPF0398 protein BBR47_29830 of Brevibacillus brevis (strain 47 / JCM 6285 / NBRC 100599).